A 335-amino-acid chain; its full sequence is Pro-cathepsin H (335 aa).

The first 22 residues, 1–22, serve as a signal peptide directing secretion; sequence MWAVLPLLCAGAWLLGAPACGA. The propeptide at 23 to 97 is activation peptide; that stretch reads AELAANSLEK…DELKRKYLWS (75 aa). N72 and N101 each carry an N-linked (GlcNAc...) asparagine glycan. Intrachain disulfides connect C102–C327, C138–C181, C172–C214, and C272–C322. The propeptide occupies 106 to 115; that stretch reads KSNYLRGTGP. C141 is a catalytic residue. N230 carries an N-linked (GlcNAc...) asparagine glycan. Residues H281 and N301 contribute to the active site.

Belongs to the peptidase C1 family. In terms of assembly, composed of a mini chain and a large chain. The large chain may be split into heavy and light chain. All chains are held together by disulfide bonds.

Its subcellular location is the lysosome. The enzyme catalyses Hydrolysis of proteins, acting as an aminopeptidase (notably, cleaving Arg-|-Xaa bonds) as well as an endopeptidase.. Its function is as follows. Important for the overall degradation of proteins in lysosomes. In Bos taurus (Bovine), this protein is Pro-cathepsin H (CTSH).